Consider the following 1104-residue polypeptide: Protein transport protein SEC31 homolog B (1104 aa).

WD repeat units follow at residues Lys5–Lys45, Pro62–Pro109, Val120–His160, Ala170–Asn210, Ser214–Arg257, Gly261–Glu301, and Ala304–Val344. At Thr526 the chain carries Phosphothreonine. Positions Pro527 to Pro562 are disordered. Acidic residues predominate over residues Thr549 to Ser560. A WD 8 repeat occupies Thr662–Gly707. Disordered regions lie at residues Leu782–Ala811, His851–Arg874, Gln892–Asn931, and Thr952–Pro994. 3 stretches are compositionally biased toward polar residues: residues Pro786 to Ala811, Pro863 to Arg874, and Gln892 to Ala908. Positions Ser959–Ala977 are enriched in low complexity.

The protein belongs to the WD repeat SEC31 family. Interacts with SEC13A and SEC13B.

It localises to the golgi apparatus. It is found in the endoplasmic reticulum. In terms of biological role, required for protein transport from the endoplasmic reticulum to the Golgi apparatus. In Arabidopsis thaliana (Mouse-ear cress), this protein is Protein transport protein SEC31 homolog B.